We begin with the raw amino-acid sequence, 190 residues long: Flavodoxin-like domain-containing protein BilS (190 aa).

It functions in the pathway porphyrin-containing compound metabolism; protoheme degradation. Its function is as follows. Together with BilR, catalyzes reduction of mesobilirubin and/or bilirubin to urobilinogen, a key step during heme degradation. BilS is probably involved in electron transfer for the bilirubin reductase BilR. This Clostridium symbiosum (strain WAL-14163) protein is Flavodoxin-like domain-containing protein BilS.